The sequence spans 725 residues: N-alpha-acetyltransferase 35, NatC auxiliary subunit (725 aa).

The residue at position 187 (Ser-187) is a Phosphoserine. The tract at residues 548–573 is disordered; that stretch reads ERIMEEQQKGRSSKKTKKKKKVRPLS. The span at 558-571 shows a compositional bias: basic residues; sequence RSSKKTKKKKKVRP.

This sequence belongs to the MAK10 family. In terms of assembly, component of the N-terminal acetyltransferase C (NatC) complex, which is composed of NAA35, NAA38 and NAA30.

It localises to the cytoplasm. In terms of biological role, auxillary component of the N-terminal acetyltransferase C (NatC) complex which catalyzes acetylation of N-terminal methionine residues. N-terminal acetylation protects proteins from ubiquitination and degradation by the N-end rule pathway. Involved in regulation of apoptosis and proliferation of smooth muscle cells. This is N-alpha-acetyltransferase 35, NatC auxiliary subunit (NAA35) from Macaca fascicularis (Crab-eating macaque).